Reading from the N-terminus, the 286-residue chain is Shikimate dehydrogenase (NADP(+)) (286 aa).

Shikimate-binding positions include 19–21 and Thr66; that span reads SLS. Lys70 functions as the Proton acceptor in the catalytic mechanism. Residues Asn91 and Asp107 each contribute to the shikimate site. Residues 129–133 and Leu229 each bind NADP(+); that span reads GSGGA. Tyr231 provides a ligand contact to shikimate. Gly252 contributes to the NADP(+) binding site.

It belongs to the shikimate dehydrogenase family. In terms of assembly, homodimer.

The catalysed reaction is shikimate + NADP(+) = 3-dehydroshikimate + NADPH + H(+). It functions in the pathway metabolic intermediate biosynthesis; chorismate biosynthesis; chorismate from D-erythrose 4-phosphate and phosphoenolpyruvate: step 4/7. In terms of biological role, involved in the biosynthesis of the chorismate, which leads to the biosynthesis of aromatic amino acids. Catalyzes the reversible NADPH linked reduction of 3-dehydroshikimate (DHSA) to yield shikimate (SA). This is Shikimate dehydrogenase (NADP(+)) from Prochlorococcus marinus (strain MIT 9215).